Here is a 90-residue protein sequence, read N- to C-terminus: Large ribosomal subunit protein bL27 (90 aa).

Positions Met1–Gly22 are disordered.

Belongs to the bacterial ribosomal protein bL27 family.

The protein is Large ribosomal subunit protein bL27 of Coxiella burnetii (strain CbuK_Q154) (Coxiella burnetii (strain Q154)).